We begin with the raw amino-acid sequence, 514 residues long: Na(+)/H(+) antiporter NhaB (514 aa).

A run of 11 helical transmembrane segments spans residues 21–41 (LAIVVFLIINPIVFFFISPFI), 43–63 (GWLLVAEFIFTLAMALKCYPL), 88–108 (IMANFEVILLLIFMVAGIFFM), 143–163 (FLDALTVVAVIISVAMGFYGV), 203–223 (LMMHAGVGTALGGVMTVVGEP), 239–259 (FFLRMAPVTIPVFICGLLTCF), 304–324 (ALIAIWLILGLAFHLAAVGLI), 349–369 (QESLPFTALLVVFFSVVAVII), 390–410 (LALFYLFNGLLSSISDNVFVA), 448–468 (ATPNGQAAFLFLLTSSISPLI), and 484–504 (IVLSIIGLLAIEFILPAATIW).

It belongs to the NhaB Na(+)/H(+) (TC 2.A.34) antiporter family.

Its subcellular location is the cell inner membrane. It carries out the reaction 2 Na(+)(in) + 3 H(+)(out) = 2 Na(+)(out) + 3 H(+)(in). In terms of biological role, na(+)/H(+) antiporter that extrudes sodium in exchange for external protons. The chain is Na(+)/H(+) antiporter NhaB from Haemophilus influenzae (strain 86-028NP).